Consider the following 34-residue polypeptide: Photosystem II reaction center protein M (34 aa).

Residues 5-25 (ILGLMAVALFILIPTSFLLIL) form a helical membrane-spanning segment.

It belongs to the PsbM family. PSII is composed of 1 copy each of membrane proteins PsbA, PsbB, PsbC, PsbD, PsbE, PsbF, PsbH, PsbI, PsbJ, PsbK, PsbL, PsbM, PsbT, PsbX, PsbY, PsbZ, Psb30/Ycf12, at least 3 peripheral proteins of the oxygen-evolving complex and a large number of cofactors. It forms dimeric complexes.

The protein localises to the plastid. The protein resides in the chloroplast thylakoid membrane. In terms of biological role, one of the components of the core complex of photosystem II (PSII). PSII is a light-driven water:plastoquinone oxidoreductase that uses light energy to abstract electrons from H(2)O, generating O(2) and a proton gradient subsequently used for ATP formation. It consists of a core antenna complex that captures photons, and an electron transfer chain that converts photonic excitation into a charge separation. This subunit is found at the monomer-monomer interface. The protein is Photosystem II reaction center protein M of Tupiella akineta (Green alga).